The following is a 206-amino-acid chain: Uracil phosphoribosyltransferase (206 aa).

5-phospho-alpha-D-ribose 1-diphosphate is bound by residues arginine 76, arginine 101, and 128 to 136 (DPMLATGGS). Uracil is bound by residues isoleucine 191 and 196-198 (GDA). Aspartate 197 contacts 5-phospho-alpha-D-ribose 1-diphosphate.

This sequence belongs to the UPRTase family. It depends on Mg(2+) as a cofactor.

It carries out the reaction UMP + diphosphate = 5-phospho-alpha-D-ribose 1-diphosphate + uracil. Its pathway is pyrimidine metabolism; UMP biosynthesis via salvage pathway; UMP from uracil: step 1/1. Allosterically activated by GTP. Catalyzes the conversion of uracil and 5-phospho-alpha-D-ribose 1-diphosphate (PRPP) to UMP and diphosphate. This Malacoplasma penetrans (strain HF-2) (Mycoplasma penetrans) protein is Uracil phosphoribosyltransferase.